A 367-amino-acid polypeptide reads, in one-letter code: MKCMPPPLREILDDVLAGHRLTEEEAVRLLATRDRGVWEIAAAANELRERKVGNVVTYVRNQNINVTNLCVNACGFCGFSRKPGDADAFFYGETAVRGKAREARERGVTEVCTVSGLHPEFDVQSYAEIYSWIRDEVPGVHIHASNPMEVAYAARRSGISTREVMELMRGAGLSTLCGTAAEILVDDVRRVICPDKIDTGSWARIIREAHGLGIRSTATIMYGHCESEADRARHLNILREIQDETHGFTEFVPLSFIHKNTPLYRAGLARAGATGREDLLMFAVARLFLDNFDHIQASWVKVGTKMAEMALLSGADDLGGTLFEESISREAGARDTDYLDPAEMRRMAEDLGRVLRQRTTTYALLPG.

A Radical SAM core domain is found at 56–290 (VTYVRNQNIN…MFAVARLFLD (235 aa)). [4Fe-4S] cluster-binding residues include cysteine 70, cysteine 74, and cysteine 77.

This sequence belongs to the radical SAM superfamily. CofH family. As to quaternary structure, consists of two subunits, CofG and CofH. [4Fe-4S] cluster is required as a cofactor.

It carries out the reaction 5-amino-6-(D-ribitylamino)uracil + L-tyrosine + S-adenosyl-L-methionine = 5-amino-5-(4-hydroxybenzyl)-6-(D-ribitylimino)-5,6-dihydrouracil + 2-iminoacetate + 5'-deoxyadenosine + L-methionine + H(+). It participates in cofactor biosynthesis; coenzyme F0 biosynthesis. Its function is as follows. Catalyzes the radical-mediated synthesis of 5-amino-5-(4-hydroxybenzyl)-6-(D-ribitylimino)-5,6-dihydrouracil from 5-amino-6-(D-ribitylamino)uracil and L-tyrosine. In Methanoculleus marisnigri (strain ATCC 35101 / DSM 1498 / JR1), this protein is 5-amino-6-(D-ribitylamino)uracil--L-tyrosine 4-hydroxyphenyl transferase.